Here is a 115-residue protein sequence, read N- to C-terminus: Tyrosine-protein phosphatase 19 (115 aa).

The region spanning 1–115 (WLMIVEQKCR…ETGSDAPMVV (115 aa)) is the Tyrosine-protein phosphatase domain. Asp-83 lines the substrate pocket.

The protein belongs to the protein-tyrosine phosphatase family.

It carries out the reaction O-phospho-L-tyrosyl-[protein] + H2O = L-tyrosyl-[protein] + phosphate. The polypeptide is Tyrosine-protein phosphatase 19 (STY-19) (Styela plicata (Wrinkled sea squirt)).